The primary structure comprises 180 residues: MLENDIKKVLVSHDEITEAAKKLGAQLTKDYAGKNPILVGILKGSIPFMAELVKHIDTHIEMDFMMVSSYHGGTASSGVINIKQDVTQDIKGRHVLFVEDIIDTGQTLKNLRDMFKEREAASVKIATLLDKPEGRVVEIEADYTCFTIPNEFVVGYGLDYKENYRNLPYIGVLKEEVYSN.

Residues lysine 43 and glycine 44 each coordinate diphosphate. Mg(2+) is bound by residues glutamate 99 and aspartate 100. Catalysis depends on aspartate 103, which acts as the Proton acceptor. GMP is bound by residues lysine 131, 152–153, and aspartate 159; that span reads FV. Arginine 165 contributes to the diphosphate binding site.

It belongs to the purine/pyrimidine phosphoribosyltransferase family. The cofactor is Mg(2+).

The protein localises to the cytoplasm. The catalysed reaction is IMP + diphosphate = hypoxanthine + 5-phospho-alpha-D-ribose 1-diphosphate. It carries out the reaction GMP + diphosphate = guanine + 5-phospho-alpha-D-ribose 1-diphosphate. It participates in purine metabolism; IMP biosynthesis via salvage pathway; IMP from hypoxanthine: step 1/1. The protein operates within purine metabolism; GMP biosynthesis via salvage pathway; GMP from guanine: step 1/1. Functionally, purine salvage pathway enzyme that catalyzes the transfer of the ribosyl-5-phosphate group from 5-phospho-alpha-D-ribose 1-diphosphate (PRPP) to the N9 position of the 6-oxopurines hypoxanthine and guanine to form the corresponding ribonucleotides IMP (inosine 5'-monophosphate) and GMP (guanosine 5'-monophosphate), with the release of PPi. This Streptococcus pneumoniae serotype 4 (strain ATCC BAA-334 / TIGR4) protein is Hypoxanthine-guanine phosphoribosyltransferase (hpt).